The following is a 214-amino-acid chain: Large ribosomal subunit protein bL25 (214 aa).

2 disordered regions span residues 1–23 and 182–214; these read MSNEFLLNAESRSDTGKGASRRL and DHDQPVAAVHQPKVRASSDDDDAAEGEEAASEE. Residues 200 to 214 are compositionally biased toward acidic residues; sequence DDDDAAEGEEAASEE.

This sequence belongs to the bacterial ribosomal protein bL25 family. CTC subfamily. Part of the 50S ribosomal subunit; part of the 5S rRNA/L5/L18/L25 subcomplex. Contacts the 5S rRNA. Binds to the 5S rRNA independently of L5 and L18.

Functionally, this is one of the proteins that binds to the 5S RNA in the ribosome where it forms part of the central protuberance. The protein is Large ribosomal subunit protein bL25 of Alcanivorax borkumensis (strain ATCC 700651 / DSM 11573 / NCIMB 13689 / SK2).